Reading from the N-terminus, the 220-residue chain is Transcriptional regulatory protein SpaR (220 aa).

The region spanning 3–115 (KILAVDDEKD…ELSARVNAHL (113 aa)) is the Response regulatory domain. Asp-51 is subject to 4-aspartylphosphate. The ompR/PhoB-type DNA-binding region spans 124–220 (QSKRVISGFL…TVWGVGYKWE (97 aa)).

Phosphorylated by SpaK.

The protein localises to the cytoplasm. Functionally, member of the two-component regulatory system SpaK/SpaR involved in the regulation of the biosynthesis of lantibiotic subtilin. SpaR may function as a regulatory protein. The protein is Transcriptional regulatory protein SpaR (spaR) of Bacillus subtilis.